We begin with the raw amino-acid sequence, 177 residues long: MSRIGKKPVPVPAGVTASVDGQIVKAKGAKGELSFVVHDEVLVKMEDGAVSVDPRDQSKEARSKWGMSRTMISNIFVGVKDGFEKKLEISGVGYRAAMQGKNLQLSLGFSHEVVYDVPAGITVAVPKPTEIVVTGIDKQQVGQVAAEIREYRGPEPYKGKGVKYAGEKIVRKEGKKK.

The protein belongs to the universal ribosomal protein uL6 family. In terms of assembly, part of the 50S ribosomal subunit.

Functionally, this protein binds to the 23S rRNA, and is important in its secondary structure. It is located near the subunit interface in the base of the L7/L12 stalk, and near the tRNA binding site of the peptidyltransferase center. This is Large ribosomal subunit protein uL6 from Brucella anthropi (strain ATCC 49188 / DSM 6882 / CCUG 24695 / JCM 21032 / LMG 3331 / NBRC 15819 / NCTC 12168 / Alc 37) (Ochrobactrum anthropi).